We begin with the raw amino-acid sequence, 450 residues long: Phosphoglucosamine mutase 2 (450 aa).

Catalysis depends on Ser-101, which acts as the Phosphoserine intermediate. 4 residues coordinate Mg(2+): Ser-101, Asp-245, Asp-247, and Asp-249. The residue at position 101 (Ser-101) is a Phosphoserine.

It belongs to the phosphohexose mutase family. Mg(2+) is required as a cofactor. In terms of processing, activated by phosphorylation.

It carries out the reaction alpha-D-glucosamine 1-phosphate = D-glucosamine 6-phosphate. Its function is as follows. Catalyzes the conversion of glucosamine-6-phosphate to glucosamine-1-phosphate. The polypeptide is Phosphoglucosamine mutase 2 (Shewanella frigidimarina (strain NCIMB 400)).